A 258-amino-acid polypeptide reads, in one-letter code: Large ribosomal subunit protein uL3 (258 aa).

It belongs to the universal ribosomal protein uL3 family. In terms of assembly, part of the 50S ribosomal subunit. Forms a cluster with proteins L14 and L19.

One of the primary rRNA binding proteins, it binds directly near the 3'-end of the 23S rRNA, where it nucleates assembly of the 50S subunit. The protein is Large ribosomal subunit protein uL3 of Spiroplasma kunkelii.